We begin with the raw amino-acid sequence, 196 residues long: MPKKGVEPVRREQLIRATFQTIDEIGMADATVATIAKKAGLSSGIVAHYFGDKDGLLNAAMRQILRELKEAVARYRADAGDDPRDQLRAIVDGNFDDSQINGTAMRVWLTFWAASMHQPELARLQRANDQRLFSNLCHQFNRLLPHPQARLAARGLAAMIDGLWLRGSLVGGQFNAEKSRRIAYGYIDFQLQAAAL.

One can recognise an HTH tetR-type domain in the interval 8 to 68; it reads PVRREQLIRA…AAMRQILREL (61 aa). Residues 31–50 constitute a DNA-binding region (H-T-H motif); that stretch reads TVATIAKKAGLSSGIVAHYF.

It functions in the pathway amine and polyamine biosynthesis; betaine biosynthesis via choline pathway [regulation]. In terms of biological role, repressor involved in the biosynthesis of the osmoprotectant glycine betaine. It represses transcription of the choline transporter BetT and the genes of BetAB involved in the synthesis of glycine betaine. The chain is HTH-type transcriptional regulator BetI from Stenotrophomonas maltophilia (strain R551-3).